The sequence spans 217 residues: Phosphate-specific transport system accessory protein PhoU homolog 2 (217 aa).

This sequence belongs to the PhoU family. As to quaternary structure, homodimer.

It localises to the cytoplasm. Functionally, plays a role in the regulation of phosphate uptake. This is Phosphate-specific transport system accessory protein PhoU homolog 2 from Methanothermobacter thermautotrophicus (strain ATCC 29096 / DSM 1053 / JCM 10044 / NBRC 100330 / Delta H) (Methanobacterium thermoautotrophicum).